Reading from the N-terminus, the 48-residue chain is MIWIKIILLMIVCLVVSVLVVVWIILLSEVFVLLWKLSQILNIIDLLL.

The helical transmembrane segment at 6–26 (IILLMIVCLVVSVLVVVWIIL) threads the bilayer.

It localises to the host membrane. This is an uncharacterized protein from Spiroplasma melliferum (SpV4).